We begin with the raw amino-acid sequence, 223 residues long: DNA mismatch repair protein MutH (223 aa).

It belongs to the MutH family.

The protein resides in the cytoplasm. Sequence-specific endonuclease that cleaves unmethylated GATC sequences. It is involved in DNA mismatch repair. In Shewanella sp. (strain MR-4), this protein is DNA mismatch repair protein MutH.